The chain runs to 190 residues: Peptidyl-tRNA hydrolase (190 aa).

Residue Tyr-14 participates in tRNA binding. Residue His-19 is the Proton acceptor of the active site. The tRNA site is built by Tyr-63, Asn-65, and Asn-112.

It belongs to the PTH family. In terms of assembly, monomer.

It localises to the cytoplasm. The catalysed reaction is an N-acyl-L-alpha-aminoacyl-tRNA + H2O = an N-acyl-L-amino acid + a tRNA + H(+). Its function is as follows. Hydrolyzes ribosome-free peptidyl-tRNAs (with 1 or more amino acids incorporated), which drop off the ribosome during protein synthesis, or as a result of ribosome stalling. In terms of biological role, catalyzes the release of premature peptidyl moieties from peptidyl-tRNA molecules trapped in stalled 50S ribosomal subunits, and thus maintains levels of free tRNAs and 50S ribosomes. This is Peptidyl-tRNA hydrolase from Kosmotoga olearia (strain ATCC BAA-1733 / DSM 21960 / TBF 19.5.1).